Consider the following 198-residue polypeptide: Dynein axonemal light chain 1 (198 aa).

LRR repeat units follow at residues 49–70, 71–92, 94–115, and 116–137; these read ACKHLALSTNNIEKISSLSGME, NLRILSLGRNLIKKIENLDAVA, TLEELWISYNQIASLSGIEKLV, and NLRVLYMSNNKITNWGEIDKLA. Residues 157 to 195 form the LRRCT domain; that stretch reads KENNATSEYRIEVVKRLPNLKKLDGMPVDVDEREQANVA.

This sequence belongs to the dynein light chain LC1-type family. Interacts with OCAD2, a outer arm dynein heavy chain. Interacts with tubulin (previously called p45) located within the A-tubule of the outer doublets in a ATP-independent manner.

The protein resides in the cytoplasm. It localises to the cytoskeleton. The protein localises to the flagellum axoneme. Functionally, part of the multisubunit axonemal ATPase complexes that generate the force for flagellar motility and govern beat frequency. Component of the outer arm dynein (ODA). May be involved in a mechanosensory feedback mechanism controlling ODA activity based on external conformational cues by tethering the outer arm dynein heavy chain (ODA2) to the A-tubule of the outer doublet microtubules within the axoneme. The protein is Dynein axonemal light chain 1 of Chlamydomonas reinhardtii (Chlamydomonas smithii).